The following is a 231-amino-acid chain: uncharacterized protein (231 aa).

5 consecutive transmembrane segments (helical) span residues 36–56, 58–78, 83–103, 143–163, and 170–190; these read SLLA…SFFI, SQVT…ALQW, APLN…TLTP, FTVM…ASLL, and SIVN…YILY.

Belongs to the BI1 family.

The protein resides in the cell membrane. This is an uncharacterized protein from Campylobacter jejuni subsp. jejuni serotype O:2 (strain ATCC 700819 / NCTC 11168).